The following is a 518-amino-acid chain: PTS system mannitol-specific EIICB component (518 aa).

The Cytoplasmic portion of the chain corresponds to 1–31 (MDTMSNSQQNKGIGRKVQAFGSFLSSMIMPN). Residues 20-352 (FGSFLSSMIM…LKFTKDPKQD (333 aa)) form the PTS EIIC type-2 domain. A helical membrane pass occupies residues 32–53 (IGAFIAWGFIAAIFIDNGWFPN). Over 54-57 (KDLA) the chain is Extracellular. A helical transmembrane segment spans residues 58-78 (QLAGPMITYLIPLLIAFSGGR). Over 79-142 (LIHDLRGGII…QGFEMLFNNF (64 aa)) the chain is Cytoplasmic. Residues 143–164 (SAGILGFIMTIFGFEVLAPIMK) form a helical membrane-spanning segment. Residues 165–173 (FIMHILSVG) lie on the Extracellular side of the membrane. Residues 174–194 (VEALVHAHLLPLVSILVEPAK) form a helical membrane-spanning segment. The Cytoplasmic portion of the chain corresponds to 195–281 (IVFLNNAINH…VLMRPLLFVS (87 aa)). The helical transmembrane segment at 282 to 301 (VILGGMTGVATYSLLDFGFK) threads the bilayer. Topologically, residues 302–321 (TPASPGSIIVYAINAPKGEF) are extracellular. The chain crosses the membrane as a helical span at residues 322–343 (LHMLTGVVLAALVSFVVSALIL). Over 344–518 (KFTKDPKQDL…LINNLKEDQD (175 aa)) the chain is Cytoplasmic. A disordered region spans residues 369–406 (SVASKLSAKDDNKAADNKTAETTTATAASNKAEDKDSD). The span at 375 to 387 (SAKDDNKAADNKT) shows a compositional bias: basic and acidic residues. Low complexity predominate over residues 388-398 (AETTTATAASN). The region spanning 426 to 518 (DHVIFACDAG…LINNLKEDQD (93 aa)) is the PTS EIIB type-2 domain. C432 (phosphocysteine intermediate) is an active-site residue. C432 carries the phosphocysteine; by EIIA modification.

In terms of assembly, homodimer.

The protein localises to the cell membrane. The enzyme catalyses D-mannitol(out) + N(pros)-phospho-L-histidyl-[protein] = D-mannitol 1-phosphate(in) + L-histidyl-[protein]. Functionally, the phosphoenolpyruvate-dependent sugar phosphotransferase system (sugar PTS), a major carbohydrate active transport system, catalyzes the phosphorylation of incoming sugar substrates concomitantly with their translocation across the cell membrane. The enzyme II CmtAB PTS system is involved in D-mannitol transport. This Staphylococcus carnosus protein is PTS system mannitol-specific EIICB component.